We begin with the raw amino-acid sequence, 505 residues long: RNA-splicing ligase RtcB homolog (505 aa).

Mn(2+) contacts are provided by Asp119, Cys122, His227, His259, and His353. 226–230 (NHYAE) lines the GMP pocket. GMP is bound by residues 353–354 (HN), 402–405 (GGTM), Ser409, 428–431 (HGAG), and Lys504. The active-site GMP-histidine intermediate is the His428.

Belongs to the RtcB family. As to quaternary structure, catalytic component of the tRNA-splicing ligase complex. It depends on Mn(2+) as a cofactor.

The protein resides in the nucleus. It localises to the cytoplasm. The enzyme catalyses a 3'-end 3'-phospho-ribonucleotide-RNA + a 5'-end dephospho-ribonucleoside-RNA + GTP = a ribonucleotidyl-ribonucleotide-RNA + GMP + diphosphate. It catalyses the reaction a 3'-end 2',3'-cyclophospho-ribonucleotide-RNA + a 5'-end dephospho-ribonucleoside-RNA + GTP + H2O = a ribonucleotidyl-ribonucleotide-RNA + GMP + diphosphate + H(+). Its function is as follows. Catalytic subunit of the tRNA-splicing ligase complex that acts by directly joining spliced tRNA halves to mature-sized tRNAs by incorporating the precursor-derived splice junction phosphate into the mature tRNA as a canonical 3',5'-phosphodiester. May act as an RNA ligase with broad substrate specificity, and may function toward other RNAs. This is RNA-splicing ligase RtcB homolog from Xenopus tropicalis (Western clawed frog).